A 190-amino-acid polypeptide reads, in one-letter code: Putative manganese efflux pump MntP (190 aa).

6 consecutive transmembrane segments (helical) span residues 3 to 23 (PISL…AALG), 41 to 61 (LIFG…GQVA), 69 to 89 (DHWI…YNGL), 105 to 125 (FWIL…VGVG), 133 to 153 (IMVA…IGVM), and 168 to 188 (IVGG…HLTA).

The protein belongs to the MntP (TC 9.B.29) family.

Its subcellular location is the cell inner membrane. Probably functions as a manganese efflux pump. In Pseudomonas syringae pv. tomato (strain ATCC BAA-871 / DC3000), this protein is Putative manganese efflux pump MntP.